Here is a 77-residue protein sequence, read N- to C-terminus: uncharacterized protein (77 aa).

Basic residues predominate over residues 1–10 (MFNNKGRRNV). The tract at residues 1-21 (MFNNKGRRNVRNNEVRRNVPV) is disordered. The span at 11 to 21 (RNNEVRRNVPV) shows a compositional bias: basic and acidic residues. Residues 20-77 (PVKEGETYTVTIEDMGRGGDGIARVEGFVVFVPETQKGETVNVKITAVKSKFAFAEKI) form the TRAM domain.

This is an uncharacterized protein from Methanocaldococcus jannaschii (strain ATCC 43067 / DSM 2661 / JAL-1 / JCM 10045 / NBRC 100440) (Methanococcus jannaschii).